A 288-amino-acid chain; its full sequence is Acetyl-coenzyme A carboxylase carboxyl transferase subunit beta, chloroplastic (288 aa).

Residues 30-288 (LWIKCFDCGL…QILSLHNHSK (259 aa)) form the CoA carboxyltransferase N-terminal domain. Positions 34, 37, 53, and 56 each coordinate Zn(2+). A C4-type zinc finger spans residues 34–56 (CFDCGLLMYSKVLKRNLKVCPQC).

The protein belongs to the AccD/PCCB family. In terms of assembly, acetyl-CoA carboxylase is a heterohexamer composed of biotin carboxyl carrier protein, biotin carboxylase and 2 subunits each of ACCase subunit alpha and ACCase plastid-coded subunit beta (accD). Requires Zn(2+) as cofactor.

The protein localises to the plastid. It localises to the chloroplast stroma. It carries out the reaction N(6)-carboxybiotinyl-L-lysyl-[protein] + acetyl-CoA = N(6)-biotinyl-L-lysyl-[protein] + malonyl-CoA. It participates in lipid metabolism; malonyl-CoA biosynthesis; malonyl-CoA from acetyl-CoA: step 1/1. Component of the acetyl coenzyme A carboxylase (ACC) complex. Biotin carboxylase (BC) catalyzes the carboxylation of biotin on its carrier protein (BCCP) and then the CO(2) group is transferred by the transcarboxylase to acetyl-CoA to form malonyl-CoA. In Pyropia yezoensis (Susabi-nori), this protein is Acetyl-coenzyme A carboxylase carboxyl transferase subunit beta, chloroplastic.